The primary structure comprises 152 residues: Lipoprotein signal peptidase (152 aa).

2 helical membrane passes run 55–75 (NKMWFFYIITVVFVGFIVFYM) and 85–105 (LGISLGLILGGAIGNFIDRVF). Residues Asp111 and Asp129 contribute to the active site. The helical transmembrane segment at 124 to 144 (VFNIADSALCIGVVLIIIQTL) threads the bilayer.

Belongs to the peptidase A8 family.

It localises to the cell membrane. It catalyses the reaction Release of signal peptides from bacterial membrane prolipoproteins. Hydrolyzes -Xaa-Yaa-Zaa-|-(S,diacylglyceryl)Cys-, in which Xaa is hydrophobic (preferably Leu), and Yaa (Ala or Ser) and Zaa (Gly or Ala) have small, neutral side chains.. Its pathway is protein modification; lipoprotein biosynthesis (signal peptide cleavage). Functionally, this protein specifically catalyzes the removal of signal peptides from prolipoproteins. This chain is Lipoprotein signal peptidase, found in Bacillus cytotoxicus (strain DSM 22905 / CIP 110041 / 391-98 / NVH 391-98).